A 132-amino-acid polypeptide reads, in one-letter code: MSLDVRVIAPNKVIWAKNAEEVILPSQSGMLGILTSHAPLYTALNTGVMKIRNETGWTSIVVMGGFVEVEKNEVLVLVNAGEYVDEIDLSAAKKDVEKALETFNSAEAPKEKEEAAEFLKYAQARLKAVVDK.

This sequence belongs to the ATPase epsilon chain family. F-type ATPases have 2 components, CF(1) - the catalytic core - and CF(0) - the membrane proton channel. CF(1) has five subunits: alpha(3), beta(3), gamma(1), delta(1), epsilon(1). CF(0) has three main subunits: a, b and c.

The protein resides in the plastid. It is found in the cyanelle thylakoid membrane. Functionally, produces ATP from ADP in the presence of a proton gradient across the membrane. The polypeptide is ATP synthase epsilon chain, cyanelle (Cyanophora paradoxa).